Here is a 688-residue protein sequence, read N- to C-terminus: Elongation factor G (688 aa).

Positions 6-280 (KLFRNFGIMA…AVVDFLPSPI (275 aa)) constitute a tr-type G domain. Residues 15–22 (AHIDAGKT), 79–83 (DTPGH), and 133–136 (NKMD) each bind GTP.

The protein belongs to the TRAFAC class translation factor GTPase superfamily. Classic translation factor GTPase family. EF-G/EF-2 subfamily.

It is found in the cytoplasm. Functionally, catalyzes the GTP-dependent ribosomal translocation step during translation elongation. During this step, the ribosome changes from the pre-translocational (PRE) to the post-translocational (POST) state as the newly formed A-site-bound peptidyl-tRNA and P-site-bound deacylated tRNA move to the P and E sites, respectively. Catalyzes the coordinated movement of the two tRNA molecules, the mRNA and conformational changes in the ribosome. In Ureaplasma parvum serovar 3 (strain ATCC 27815 / 27 / NCTC 11736), this protein is Elongation factor G.